The primary structure comprises 284 residues: 2-dehydro-3-deoxyphosphooctonate aldolase (284 aa).

This sequence belongs to the KdsA family.

The protein localises to the cytoplasm. It carries out the reaction D-arabinose 5-phosphate + phosphoenolpyruvate + H2O = 3-deoxy-alpha-D-manno-2-octulosonate-8-phosphate + phosphate. It participates in carbohydrate biosynthesis; 3-deoxy-D-manno-octulosonate biosynthesis; 3-deoxy-D-manno-octulosonate from D-ribulose 5-phosphate: step 2/3. Its pathway is bacterial outer membrane biogenesis; lipopolysaccharide biosynthesis. In Photobacterium profundum (strain SS9), this protein is 2-dehydro-3-deoxyphosphooctonate aldolase.